A 420-amino-acid chain; its full sequence is MRIDLSLLLSDQNLDAGAPTSQRQLRIAVAAKADDHDRRLPLNLCLVLDHSGSMDGQPLETVKSAALGLIDRLEEDDRLSVIAFDHRAKIVIENQQVRNGAAIAKAIERLKAEGGTAIDEGLKLGIQEAAKGKEDRVSHIFLLTDGENEHGDNDRCLKLGTVASDYKLTVHTLGFGDHWNQDVLEAIAASAQGSLSYIENPSEALHTFRQLFQRMSNVGLTNAHLLLELAPQAHLAIVKPVAQVSPETMDLTVQNQGAIEEVRLGDLMTDQERVLLLNLYLDQLLPGQHVIGQVQIRYDDPASGQTNLLSDPLPLTIQVQTQYQPSTDVQVQESILTLAKYRQTQIAETKLKAGDRQGAATMLQTAAKTALQMGDKNGATILQTNATRLQSGEDLSEGDRKKTRMVSKTTLQPPSAPSEH.

The VWFA domain maps to 43–215; sequence NLCLVLDHSG…HTFRQLFQRM (173 aa). The tract at residues 389–420 is disordered; it reads LQSGEDLSEGDRKKTRMVSKTTLQPPSAPSEH.

This is an uncharacterized protein from Synechocystis sp. (strain ATCC 27184 / PCC 6803 / Kazusa).